The primary structure comprises 158 residues: Endoribonuclease YbeY (158 aa).

Residues His119, His123, and His129 each coordinate Zn(2+).

Belongs to the endoribonuclease YbeY family. It depends on Zn(2+) as a cofactor.

It localises to the cytoplasm. Functionally, single strand-specific metallo-endoribonuclease involved in late-stage 70S ribosome quality control and in maturation of the 3' terminus of the 16S rRNA. This is Endoribonuclease YbeY from Acinetobacter baumannii (strain SDF).